A 214-amino-acid polypeptide reads, in one-letter code: Chalcone isomerase-like protein 1 (214 aa).

This sequence belongs to the chalcone isomerase family. In terms of tissue distribution, mostly expressed in glandular trichomes (lupulin glands), and, to a lower extent, in cones, cones bracts, leaves, stems and roots.

The protein resides in the cytoplasm. The enzyme catalyses a chalcone = a flavanone.. Its pathway is secondary metabolite biosynthesis; flavonoid biosynthesis. Functionally, involved in the biosynthesis of prenylated phenolics natural products which contribute to the bitter taste of beer and display broad biological activities. Involved in anthocyanin biosynthesis. Polyketide binding proteins (PBP) which reduces the catalytic activities of CHS_H1 and PT1L and prevents demethylxanthohumol (DMX) production, by binding to DMX and naringenin chalcone (NC) to stabilize the chalconoids ring-opened structure. The chain is Chalcone isomerase-like protein 1 from Humulus lupulus (European hop).